We begin with the raw amino-acid sequence, 172 residues long: Shikimate kinase (172 aa).

11-16 (GAGKST) is a binding site for ATP. Residue Ser15 participates in Mg(2+) binding. Substrate is bound by residues Asp33, Arg57, and Gly79. Position 117 (Arg117) interacts with ATP. Substrate is bound at residue Arg136. Position 153 (Arg153) interacts with ATP.

Belongs to the shikimate kinase family. As to quaternary structure, monomer. Requires Mg(2+) as cofactor.

It localises to the cytoplasm. It catalyses the reaction shikimate + ATP = 3-phosphoshikimate + ADP + H(+). It participates in metabolic intermediate biosynthesis; chorismate biosynthesis; chorismate from D-erythrose 4-phosphate and phosphoenolpyruvate: step 5/7. Functionally, catalyzes the specific phosphorylation of the 3-hydroxyl group of shikimic acid using ATP as a cosubstrate. This is Shikimate kinase from Pseudomonas syringae pv. syringae (strain B728a).